Here is a 343-residue protein sequence, read N- to C-terminus: ELAV-like protein 3 (343 aa).

3 consecutive RRM domains span residues 35–113 (TNLI…YARP), 121–202 (ANLY…FANN), and 260–338 (WCIF…FKTS).

It belongs to the RRM elav family.

RNA-binding protein that binds to AU-rich sequences (AREs) of target mRNAs. May also bind poly-A tracts via RRM 3. May be involved in neuronal differentiation and maintenance. In Xenopus tropicalis (Western clawed frog), this protein is ELAV-like protein 3.